Reading from the N-terminus, the 81-residue chain is Photosystem I iron-sulfur center (81 aa).

4Fe-4S ferredoxin-type domains are found at residues 2–31 and 39–68; these read SHTVKIYDTCIGCTQCVRACPTDVLEMVPW and IASSPRTEDCVGCKRCETACPTDFLSIRVY. 8 residues coordinate [4Fe-4S] cluster: C11, C14, C17, C21, C48, C51, C54, and C58.

As to quaternary structure, the cyanobacterial PSI reaction center is composed of one copy each of PsaA,B,C,D,E,F,I,J,K,L,M and X, and forms trimeric complexes. It depends on [4Fe-4S] cluster as a cofactor.

It is found in the cellular thylakoid membrane. The catalysed reaction is reduced [plastocyanin] + hnu + oxidized [2Fe-2S]-[ferredoxin] = oxidized [plastocyanin] + reduced [2Fe-2S]-[ferredoxin]. Its function is as follows. Apoprotein for the two 4Fe-4S centers FA and FB of photosystem I (PSI); essential for photochemical activity. FB is the terminal electron acceptor of PSI, donating electrons to ferredoxin. The C-terminus interacts with PsaA/B/D and helps assemble the protein into the PSI complex. Required for binding of PsaD and PsaE to PSI. PSI is a plastocyanin/cytochrome c6-ferredoxin oxidoreductase, converting photonic excitation into a charge separation, which transfers an electron from the donor P700 chlorophyll pair to the spectroscopically characterized acceptors A0, A1, FX, FA and FB in turn. The chain is Photosystem I iron-sulfur center from Mastigocladus laminosus (Fischerella sp.).